Reading from the N-terminus, the 353-residue chain is MEKFKAAMLLGTVGDALGYGNVCRENSASGSIQEELQKTRGLDSLVLSPGKWPVSDNTIMHMATAEALTTDYWCLDDLYREMVKRYVETVEKLSEHRPDPSTIEGCSQLKPDNYLLAWHTPFSEKGSGFGAATKAMCIGMRYWKPERLETLIEVSIECGRMTHNHPTGFLGSLCTALFASYAIQGKSLVQWGRDMLKVLPLAEEYCRKSIRHMAEYQEHWFYFEAKWQFYLEERKIREDSEVTAVFPDNYDAEERDKTYKKWSSEGRGGRRGHDAPMIAYDALLASGSSWTELCQRAMFHRGESGATGTIAGCLFGLLHGLATVPPGLYQELEHKGRLEDLGTALHRLSTEEK.

A Phosphoserine modification is found at Ser27.

Belongs to the ADP-ribosylglycohydrolase family.

The protein localises to the cytoplasm. It localises to the myofibril. Its subcellular location is the sarcomere. In terms of biological role, required for myofibril assembly and outgrowth of the cardiac chambers in the developing heart. Appears to be catalytically inactive, showing no activity against O-acetyl-ADP-ribose. The polypeptide is Inactive ADP-ribosyltransferase ARH2 (Adprhl1) (Rattus norvegicus (Rat)).